A 416-amino-acid chain; its full sequence is MEIAKKAEIIAVGSELLLGQIANTNAQFISKELAEIGVNVFYHTAVGDNPERLKQVIRIAEERSDLIIFSGGLGPTKDDLTKETIANTLGRPLVLNDEAFRSIEEYFAKTKRTMSPNNRKQALVIEGSDVLANHFGMAPGMLAEHGSRLYMLLPGPPSELRPMFENEAKPLLLKKLGSNEKIVSTVLRFFGIGESQLEADLEDIIDAQTNPTIAPLAADGEVTLRLTAKHADEKETERLLKETEAAILERVGEFFYGYDDTSLVKELSKACRQNGITISSAESFTGGLFSEWVTDLSGASQLFAGGVVCYSDSVKQHVLGVKAETLAESGAVSKECAKELAAGVRKLTGSDIGISFTGVAGPDPQEGHAPGRVFIGISAEGKEEVHEFNFAGSRTGIRKRAAKYGCHLILKMLDQK.

The protein belongs to the CinA family.

In Bacillus velezensis (strain DSM 23117 / BGSC 10A6 / LMG 26770 / FZB42) (Bacillus amyloliquefaciens subsp. plantarum), this protein is Putative competence-damage inducible protein.